The chain runs to 312 residues: uncharacterized protein (312 aa).

This sequence belongs to the asfivirus CP312R family.

It is found in the virion. This is an uncharacterized protein from African swine fever virus (isolate Tick/Malawi/Lil 20-1/1983) (ASFV).